The sequence spans 315 residues: Small ribosomal subunit protein uS2 (315 aa).

A disordered region spans residues 241-315; it reads AQHGEERRPG…QPAPGSDANR (75 aa). The segment covering 243–288 has biased composition (basic and acidic residues); sequence HGEERRPGEEDRDAASERGQKDRRDRRDRRGGGRDRERREPREDRA.

It belongs to the universal ribosomal protein uS2 family.

The chain is Small ribosomal subunit protein uS2 from Anaeromyxobacter sp. (strain Fw109-5).